A 422-amino-acid polypeptide reads, in one-letter code: L-cysteine:1D-myo-inositol 2-amino-2-deoxy-alpha-D-glucopyranoside ligase (422 aa).

Cys-43 contacts Zn(2+). L-cysteinyl-5'-AMP is bound by residues 43-46 (CGIT), Thr-58, and 81-83 (NVT). A 'HIGH' region motif is present at residues 45–55 (ITPYDATHLGH). A compositionally biased stretch (basic and acidic residues) spans 185-200 (AERGGDPDRPGKRNRL). Residues 185–221 (AERGGDPDRPGKRNRLDPMLWRGRRPGEPSWPGPRGV) are disordered. Residues 186-191 (ERGGDP) carry the 'ERGGDP' region motif. L-cysteinyl-5'-AMP is bound at residue Trp-227. Zn(2+) is bound at residue Cys-231. Residue 249–251 (GSD) participates in L-cysteinyl-5'-AMP binding. Zn(2+) is bound at residue His-256. Ile-288 is an L-cysteinyl-5'-AMP binding site. The 'KMSKS' region signature appears at 294–298 (KMSKS).

The protein belongs to the class-I aminoacyl-tRNA synthetase family. MshC subfamily. As to quaternary structure, monomer. It depends on Zn(2+) as a cofactor.

It carries out the reaction 1D-myo-inositol 2-amino-2-deoxy-alpha-D-glucopyranoside + L-cysteine + ATP = 1D-myo-inositol 2-(L-cysteinylamino)-2-deoxy-alpha-D-glucopyranoside + AMP + diphosphate + H(+). Its function is as follows. Catalyzes the ATP-dependent condensation of GlcN-Ins and L-cysteine to form L-Cys-GlcN-Ins. The chain is L-cysteine:1D-myo-inositol 2-amino-2-deoxy-alpha-D-glucopyranoside ligase from Geodermatophilus obscurus (strain ATCC 25078 / DSM 43160 / JCM 3152 / CCUG 61914 / KCC A-0152 / KCTC 9177 / NBRC 13315 / NRRL B-3577 / G-20).